A 175-amino-acid polypeptide reads, in one-letter code: Shikimate kinase (175 aa).

11-16 (GAGKTT) serves as a coordination point for ATP. Residue threonine 15 participates in Mg(2+) binding. Residues aspartate 33, arginine 57, and glycine 79 each contribute to the substrate site. Arginine 118 is an ATP binding site. Arginine 140 lines the substrate pocket.

It belongs to the shikimate kinase family. Monomer. Mg(2+) serves as cofactor.

It is found in the cytoplasm. It catalyses the reaction shikimate + ATP = 3-phosphoshikimate + ADP + H(+). The protein operates within metabolic intermediate biosynthesis; chorismate biosynthesis; chorismate from D-erythrose 4-phosphate and phosphoenolpyruvate: step 5/7. Functionally, catalyzes the specific phosphorylation of the 3-hydroxyl group of shikimic acid using ATP as a cosubstrate. This is Shikimate kinase from Bacteroides thetaiotaomicron (strain ATCC 29148 / DSM 2079 / JCM 5827 / CCUG 10774 / NCTC 10582 / VPI-5482 / E50).